Here is a 520-residue protein sequence, read N- to C-terminus: Calcium-dependent protein kinase 25 (520 aa).

Gly-2 carries N-myristoyl glycine lipidation. Positions 31–87 are disordered; it reads PLKPQLQDKPPQPMLMNKDDDKTKLNDTHGDPKLLEGKEKPAQKQTSQGQGGRKCSD. Over residues 47-72 the composition is skewed to basic and acidic residues; that stretch reads NKDDDKTKLNDTHGDPKLLEGKEKPA. In terms of domain architecture, Protein kinase spans 132 to 390; that stretch reads YNLGSKLGHG…AQQVLCHPWI (259 aa). ATP contacts are provided by residues 138-146 and Lys-161; that span reads LGHGQFGTT. Asp-256 serves as the catalytic Proton acceptor. A Phosphoserine modification is found at Ser-296. Positions 396–426 are autoinhibitory domain; that stretch reads APDTPLDTTVLSRLKKFSATDKLKKMALRVI. Residues 433–468 form the EF-hand 1 domain; that stretch reads EEIHELRETFKTIDSGKSGRVTYKELKNGLERFNTN. Ca(2+) is bound by residues Asp-446, Ser-450, Arg-452, Glu-457, Asp-483, Glu-487, Thr-489, and Glu-494. An EF-hand 2; degenerate domain is found at 469 to 505; it reads LDNSDINSLMQIPTDVHLEDTVDYNEFIEAIVRLRQI.

This sequence belongs to the protein kinase superfamily. Ser/Thr protein kinase family. CDPK subfamily.

The protein localises to the membrane. It carries out the reaction L-seryl-[protein] + ATP = O-phospho-L-seryl-[protein] + ADP + H(+). The enzyme catalyses L-threonyl-[protein] + ATP = O-phospho-L-threonyl-[protein] + ADP + H(+). With respect to regulation, activated by calcium. Autophosphorylation may play an important role in the regulation of the kinase activity. May play a role in signal transduction pathways that involve calcium as a second messenger. The polypeptide is Calcium-dependent protein kinase 25 (CPK25) (Arabidopsis thaliana (Mouse-ear cress)).